Here is a 126-residue protein sequence, read N- to C-terminus: UPF0538 protein C2orf76 homolog (126 aa).

The protein belongs to the UPF0538 family.

The sequence is that of UPF0538 protein C2orf76 homolog from Danio rerio (Zebrafish).